Here is a 218-residue protein sequence, read N- to C-terminus: Probable GTP-binding protein EngB (218 aa).

Residues 44–218 (DRIEVCFAGR…LRATIATIET (175 aa)) form the EngB-type G domain. GTP contacts are provided by residues 52 to 59 (GRSNVGKS), 79 to 83 (GRTQE), 97 to 100 (DLPG), 164 to 167 (TKSD), and 198 to 200 (TSS). Mg(2+) is bound by residues serine 59 and threonine 81.

This sequence belongs to the TRAFAC class TrmE-Era-EngA-EngB-Septin-like GTPase superfamily. EngB GTPase family. The cofactor is Mg(2+).

In terms of biological role, necessary for normal cell division and for the maintenance of normal septation. The polypeptide is Probable GTP-binding protein EngB (Jannaschia sp. (strain CCS1)).